The following is a 463-amino-acid chain: Exodeoxyribonuclease 7 large subunit (463 aa).

The protein belongs to the XseA family. Heterooligomer composed of large and small subunits.

It localises to the cytoplasm. It carries out the reaction Exonucleolytic cleavage in either 5'- to 3'- or 3'- to 5'-direction to yield nucleoside 5'-phosphates.. Its function is as follows. Bidirectionally degrades single-stranded DNA into large acid-insoluble oligonucleotides, which are then degraded further into small acid-soluble oligonucleotides. The polypeptide is Exodeoxyribonuclease 7 large subunit (Klebsiella pneumoniae subsp. pneumoniae (strain ATCC 700721 / MGH 78578)).